Reading from the N-terminus, the 1208-residue chain is MRLSKLKLAGFKTFVDPTTVLTPGNLVGVVGPNGCGKSNIIDAVRWVLGETRASALRGESMQDVIFNGSTTRKPVSRASVELVFDNAEGRAAGQWSRYAEISVKRVLDRSGESTYYINNVHVRRKDVIDLFLGTGLGPRAYAIIEQGMISRIIEARPEEIRGFLEEAAGVTKYRERRKETEGRLRDARDNLARLDDIRMELGERIVHLEAQAAVAARYRELDAAHVEKQQLLWLVKRNEARAEQARVAASLNEASSRIEADSARLQELETSVESRRDAHFEASEAVHVAQNDLFAASAEVARLETELQHLGEARRRLEARLAQLELDRGHWSSRRETLAADRARWQELAENAALRAEHAEARHLEIADRLPELDSSRQGADATMAAARRELAQTEQQLRVEETKRASALRALEALQQRRGRLEGERGGIVGPDERVLAEREARLEALQDELEVHQQELAAAQPRLPDAQAALKAALEHERAVQRRLTELRARRDALMQLQARVQSQGKLGDWLERHGLDQLPPLWKQLQVAAGWDEAVQAVLRERLAALTSPDPALALAAARTVLDETPPESLAIALPARSGAPAERANCAQGPLSPQGRVTVATTATESSTAIATDVAPAVLALAGLVEVRDPALRALVDDFLAGAWAVERLEDWLPLRAQLAPSTCLVGPRGQVLTRDALVHHAPDARTHGVIERQREIEGLSAELQAHEDEAHLAHDALVVAESAASALQERINGLRRELQTIQAQVHAEQVEVLKLAQARARAQERREQLARDLEDIVHLESAEREHLTRAELEQARAAELAELQRERLDAATEVLREREHAVREARALEQSAARELQEARFSERECAGKLEDIARNQQLAGEQLERVVAELAARAAELDATDDHRSAEALQEALALRGRREAALAARRDALAEAAAALKQVEELRLRTEHEAAPIRARVAELRLALQAAELAVAQFEERLVEARADEAALAPLLAAEPKESTLQREVARLAREIAELGAVNMAALDELTTASERKGYLDAQTEDLLQAIDTLEDAIRRIDRETREQLQDTYNTVNRQFGALFPQLFGGGRAELVLTGEEILDAGIQIVAQPPGKKNASIHLLSGGEKALTAIALVFSMFQLNPAPFCMLDEVDAPLDDTNTERYANMVKRMSAQTQFIFISHSKITMEFAQQLVGVTMQEQGVSRVVEVDIEEALRLADPAAA.

Residue 32–39 (PNGCGKSN) coordinates ATP. Coiled-coil stretches lie at residues 170-205 (VTKY…GERI), 239-504 (EARA…ARVQ), and 694-1054 (VIER…QLQD).

The protein belongs to the SMC family. Homodimer.

It is found in the cytoplasm. Its function is as follows. Required for chromosome condensation and partitioning. In Thauera aminoaromatica, this protein is Chromosome partition protein Smc.